The chain runs to 185 residues: Peptidyl-tRNA hydrolase (185 aa).

Residue Tyr14 participates in tRNA binding. His19 (proton acceptor) is an active-site residue. Residues Tyr64, Asn66, and Asn112 each coordinate tRNA.

It belongs to the PTH family. Monomer.

It is found in the cytoplasm. It catalyses the reaction an N-acyl-L-alpha-aminoacyl-tRNA + H2O = an N-acyl-L-amino acid + a tRNA + H(+). Functionally, hydrolyzes ribosome-free peptidyl-tRNAs (with 1 or more amino acids incorporated), which drop off the ribosome during protein synthesis, or as a result of ribosome stalling. Catalyzes the release of premature peptidyl moieties from peptidyl-tRNA molecules trapped in stalled 50S ribosomal subunits, and thus maintains levels of free tRNAs and 50S ribosomes. The polypeptide is Peptidyl-tRNA hydrolase (Shouchella clausii (strain KSM-K16) (Alkalihalobacillus clausii)).